We begin with the raw amino-acid sequence, 428 residues long: Dihydroorotase (428 aa).

2 residues coordinate Zn(2+): H59 and H61. Substrate contacts are provided by residues 61-63 and N93; that span reads HLR. Positions 151, 178, and 231 each coordinate Zn(2+). N277 contacts substrate. D304 is a binding site for Zn(2+). The active site involves D304. Substrate-binding positions include H308 and 322-323; that span reads FG.

This sequence belongs to the metallo-dependent hydrolases superfamily. DHOase family. Class I DHOase subfamily. Zn(2+) serves as cofactor.

The catalysed reaction is (S)-dihydroorotate + H2O = N-carbamoyl-L-aspartate + H(+). It participates in pyrimidine metabolism; UMP biosynthesis via de novo pathway; (S)-dihydroorotate from bicarbonate: step 3/3. Functionally, catalyzes the reversible cyclization of carbamoyl aspartate to dihydroorotate. The protein is Dihydroorotase of Bacillus cereus (strain G9842).